We begin with the raw amino-acid sequence, 95 residues long: Co-chaperonin GroES (95 aa).

The protein belongs to the GroES chaperonin family. In terms of assembly, heptamer of 7 subunits arranged in a ring. Interacts with the chaperonin GroEL.

The protein localises to the cytoplasm. In terms of biological role, together with the chaperonin GroEL, plays an essential role in assisting protein folding. The GroEL-GroES system forms a nano-cage that allows encapsulation of the non-native substrate proteins and provides a physical environment optimized to promote and accelerate protein folding. GroES binds to the apical surface of the GroEL ring, thereby capping the opening of the GroEL channel. The polypeptide is Co-chaperonin GroES (Syntrophotalea carbinolica (strain DSM 2380 / NBRC 103641 / GraBd1) (Pelobacter carbinolicus)).